Consider the following 139-residue polypeptide: Small ribosomal subunit protein bS6 (139 aa).

The segment covering 114 to 133 has biased composition (basic and acidic residues); it reads KKEPREPRAPREPRVEKVDE. The interval 114-139 is disordered; it reads KKEPREPRAPREPRVEKVDEQTFTEE.

The protein belongs to the bacterial ribosomal protein bS6 family.

In terms of biological role, binds together with bS18 to 16S ribosomal RNA. The chain is Small ribosomal subunit protein bS6 from Campylobacter concisus (strain 13826).